A 270-amino-acid polypeptide reads, in one-letter code: Release factor glutamine methyltransferase (270 aa).

S-adenosyl-L-methionine-binding positions include 112 to 116, Asp135, Trp162, and Asn178; that span reads GTGSG. Position 178–181 (178–181) interacts with substrate; sequence NPPY.

Belongs to the protein N5-glutamine methyltransferase family. PrmC subfamily.

The catalysed reaction is L-glutaminyl-[peptide chain release factor] + S-adenosyl-L-methionine = N(5)-methyl-L-glutaminyl-[peptide chain release factor] + S-adenosyl-L-homocysteine + H(+). Its function is as follows. Methylates the class 1 translation termination release factors RF1/PrfA and RF2/PrfB on the glutamine residue of the universally conserved GGQ motif. The polypeptide is Release factor glutamine methyltransferase (Bordetella pertussis (strain Tohama I / ATCC BAA-589 / NCTC 13251)).